A 432-amino-acid chain; its full sequence is Serine/threonine-protein phosphatase 2A activator 1 (432 aa).

The segment at proline 322 to lysine 432 is disordered. Positions threonine 366–alanine 389 are enriched in basic and acidic residues. Residues threonine 396–glycine 412 show a composition bias toward low complexity.

This sequence belongs to the PTPA-type PPIase family.

It localises to the cytoplasm. The protein resides in the nucleus. The catalysed reaction is [protein]-peptidylproline (omega=180) = [protein]-peptidylproline (omega=0). PPIases accelerate the folding of proteins. It catalyzes the cis-trans isomerization of proline imidic peptide bonds in oligopeptides. Acts as a regulatory subunit for PP2A-like phosphatases modulating their activity or substrate specificity, probably by inducing a conformational change in the catalytic subunit, a direct target of the PPIase. Can reactivate inactive phosphatase PP2A-phosphatase methylesterase complexes (PP2Ai) in presence of ATP and Mg(2+) by dissociating the inactive form from the complex. This is Serine/threonine-protein phosphatase 2A activator 1 (RRD1) from Yarrowia lipolytica (strain CLIB 122 / E 150) (Yeast).